Reading from the N-terminus, the 201-residue chain is LexA repressor (201 aa).

The H-T-H motif DNA-binding region spans 29–49 (VREICKAVGLSSTSSVHFHLK). Catalysis depends on for autocatalytic cleavage activity residues serine 125 and lysine 162.

The protein belongs to the peptidase S24 family. Homodimer.

The enzyme catalyses Hydrolysis of Ala-|-Gly bond in repressor LexA.. Its function is as follows. Represses a number of genes involved in the response to DNA damage (SOS response), including recA and lexA. In the presence of single-stranded DNA, RecA interacts with LexA causing an autocatalytic cleavage which disrupts the DNA-binding part of LexA, leading to derepression of the SOS regulon and eventually DNA repair. The polypeptide is LexA repressor (Clostridium botulinum (strain 657 / Type Ba4)).